We begin with the raw amino-acid sequence, 498 residues long: NADH-quinone oxidoreductase subunit N 2 (498 aa).

Transmembrane regions (helical) follow at residues 19–39 (VATQLSIIFGWASVLLVIALF), 47–67 (IVGYLAMVGAMVAAAVGIPLW), 83–103 (YSLTLNWLFLAAAAITMVLSL), 114–134 (SEYYVLVLFATGGMMLLAQGA), 136–156 (LIILFLGLELLSIVLYVLTGF), 171–191 (LLIGAFAGGFVVFGIALLYGA), 215–235 (IYLLAGAALVVVGFGYKVAMA), 249–269 (PTPIAGLLSVGSKAAGFAALL), 282–302 (IWAPVLAVLAIATLAVGNIGA), 317–337 (IGHAGYILFGVIAAGAPGGIA), 345–365 (VLLYLIAYTFTNLGAFGVLIA), 389–409 (LAVAMAVCMLSLAGVPPTGGF), 420–440 (WLSGMGWITVIGVIVAAIAAF), and 468–488 (AGLALATLGVLILGFLPTPAI).

It belongs to the complex I subunit 2 family. NDH-1 is composed of 14 different subunits. Subunits NuoA, H, J, K, L, M, N constitute the membrane sector of the complex.

The protein localises to the cell membrane. It catalyses the reaction a quinone + NADH + 5 H(+)(in) = a quinol + NAD(+) + 4 H(+)(out). Its function is as follows. NDH-1 shuttles electrons from NADH, via FMN and iron-sulfur (Fe-S) centers, to quinones in the respiratory chain. The immediate electron acceptor for the enzyme in this species is believed to be ubiquinone. Couples the redox reaction to proton translocation (for every two electrons transferred, four hydrogen ions are translocated across the cytoplasmic membrane), and thus conserves the redox energy in a proton gradient. This chain is NADH-quinone oxidoreductase subunit N 2, found in Roseiflexus castenholzii (strain DSM 13941 / HLO8).